We begin with the raw amino-acid sequence, 100 residues long: Large ribosomal subunit protein eL21 (100 aa).

The protein belongs to the eukaryotic ribosomal protein eL21 family.

This is Large ribosomal subunit protein eL21 from Pyrobaculum aerophilum (strain ATCC 51768 / DSM 7523 / JCM 9630 / CIP 104966 / NBRC 100827 / IM2).